The chain runs to 218 residues: Thiopurine S-methyltransferase (218 aa).

S-adenosyl-L-methionine-binding residues include W10, L45, E66, and R123.

It belongs to the class I-like SAM-binding methyltransferase superfamily. TPMT family.

The protein resides in the cytoplasm. The enzyme catalyses S-adenosyl-L-methionine + a thiopurine = S-adenosyl-L-homocysteine + a thiopurine S-methylether.. The polypeptide is Thiopurine S-methyltransferase (Pseudomonas aeruginosa (strain ATCC 15692 / DSM 22644 / CIP 104116 / JCM 14847 / LMG 12228 / 1C / PRS 101 / PAO1)).